The following is a 277-amino-acid chain: Large ribosomal subunit protein uL2 (277 aa).

The disordered stretch occupies residues 219 to 277 (TVRGSVMNPNDHPHGGGEGKAPVGRKAPSTPWGKPALGLKTRNKKAKSDKLIVRRRNEK). Over residues 264-277 (AKSDKLIVRRRNEK) the composition is skewed to basic and acidic residues.

Belongs to the universal ribosomal protein uL2 family. Part of the 50S ribosomal subunit. Forms a bridge to the 30S subunit in the 70S ribosome.

Functionally, one of the primary rRNA binding proteins. Required for association of the 30S and 50S subunits to form the 70S ribosome, for tRNA binding and peptide bond formation. It has been suggested to have peptidyltransferase activity; this is somewhat controversial. Makes several contacts with the 16S rRNA in the 70S ribosome. This is Large ribosomal subunit protein uL2 from Streptococcus sanguinis (strain SK36).